A 274-amino-acid chain; its full sequence is Methylamine utilization protein MauF (274 aa).

7 helical membrane passes run Trp30–Met50, Ala52–Trp72, Leu105–Ala125, Leu127–Gly147, Trp176–Thr196, Val202–Phe222, and Ala253–Leu273.

It is found in the cell membrane. It functions in the pathway one-carbon metabolism; methylamine degradation. This chain is Methylamine utilization protein MauF (mauF), found in Paracoccus versutus (Thiobacillus versutus).